Here is a 69-residue protein sequence, read N- to C-terminus: MFDKKKLDRINELAKKNKEGILSADEIKEREILRKEYLENFRAHFRSRLDSVKVVSPEEYEQYMKNNKN.

It belongs to the UPF0291 family.

The protein resides in the cytoplasm. This chain is UPF0291 protein CD630_10710, found in Clostridioides difficile (strain 630) (Peptoclostridium difficile).